The chain runs to 952 residues: Substrate-adhesion molecule (952 aa).

Residues 1-25 (MKSQKIGSMILLIGILLAIFNFAYS) form the signal peptide. Over 26-527 (DDDIERFSIN…TWFFDTNVET (502 aa)) the chain is Extracellular. N-linked (GlcNAc...) asparagine glycans are attached at residues N78, N182, N231, N243, and N412. One can recognise an EGF-like domain in the interval 438 to 471 (EIRRCKDSCNGYGTCNTANYTCVCDSAHMGETCN). Disulfide bonds link C442–C452, C446–C459, and C461–C470. The N-linked (GlcNAc...) asparagine glycan is linked to N456. The chain crosses the membrane as a helical span at residues 528-548 (GVIALACIFIAFVGILYIIDI). Residues 549–591 (GTTVPIDIKRAKDYAEENKSGQFPKATHEEASVLWWRDQRSHK) lie on the Cytoplasmic side of the membrane. A helical transmembrane segment spans residues 592–612 (AWTFMDQFQLISLVSHIGVVF). Over 613-678 (PSRFISFTEY…GDLYLLPNIL (66 aa)) the chain is Extracellular. The helical transmembrane segment at 679 to 699 (FWFGLLLGVFLVPLLLAYAII) threads the bilayer. The Cytoplasmic segment spans residues 700 to 722 (SFMESLIHWKEVVTNRLIHVLVR). The helical transmembrane segment at 723–743 (ILTFGYIGVLIAASFAMVTPL) threads the bilayer. Residues 744–752 (HDYRIIIPG) lie on the Extracellular side of the membrane. A helical membrane pass occupies residues 753 to 773 (AIIFVLYGIGLPIAIWFLLAV). Topologically, residues 774 to 801 (PEARLHNPTFKQRFGCLYVHYKPKTDHR) are cytoplasmic. The chain crosses the membrane as a helical span at residues 802 to 822 (FVVFMFIKRFIMAVIIGILSF). Over 823-837 (KPMTNYPLTGTDLAV) the chain is Extracellular. Residues 838-858 (PIVQVVVIDIALIGYAVLLFI) form a helical membrane-spanning segment. Topologically, residues 859-868 (RKPYFDHYQL) are cytoplasmic. The helical transmembrane segment at 869 to 889 (WLEYLLTAINIVTVSLSLTHI) threads the bilayer. Residues 890–897 (KSPSAAGE) are Extracellular-facing. A helical transmembrane segment spans residues 898–918 (LIACLIQALALVACIAAYVVA). Residues 919 to 952 (WLQMRSSFIKKVKKYLCCCCKSSKSSGEIDLSKK) lie on the Cytoplasmic side of the membrane.

It is found in the cell membrane. Functionally, involved in substrate adhesion, myosin-independent cytokinesis, organization of actin cytoskeleton, and phagocytosis. In Dictyostelium discoideum (Social amoeba), this protein is Substrate-adhesion molecule (sadA).